A 159-amino-acid chain; its full sequence is Ribosome maturation factor RimP (159 aa).

It belongs to the RimP family.

Its subcellular location is the cytoplasm. Its function is as follows. Required for maturation of 30S ribosomal subunits. In Streptococcus pneumoniae (strain 70585), this protein is Ribosome maturation factor RimP.